Consider the following 295-residue polypeptide: Aspartate carbamoyltransferase catalytic subunit (295 aa).

Carbamoyl phosphate-binding residues include Arg-54 and Thr-55. Position 82 (Lys-82) interacts with L-aspartate. The carbamoyl phosphate site is built by Arg-104, His-132, and Gln-135. Arg-165 and Arg-218 together coordinate L-aspartate. Residues Gly-257 and Pro-258 each contribute to the carbamoyl phosphate site.

This sequence belongs to the aspartate/ornithine carbamoyltransferase superfamily. ATCase family. In terms of assembly, heterododecamer (2C3:3R2) of six catalytic PyrB chains organized as two trimers (C3), and six regulatory PyrI chains organized as three dimers (R2).

It carries out the reaction carbamoyl phosphate + L-aspartate = N-carbamoyl-L-aspartate + phosphate + H(+). Its pathway is pyrimidine metabolism; UMP biosynthesis via de novo pathway; (S)-dihydroorotate from bicarbonate: step 2/3. In terms of biological role, catalyzes the condensation of carbamoyl phosphate and aspartate to form carbamoyl aspartate and inorganic phosphate, the committed step in the de novo pyrimidine nucleotide biosynthesis pathway. This is Aspartate carbamoyltransferase catalytic subunit from Wolbachia pipientis wMel.